The sequence spans 212 residues: RNA chaperone ProQ (212 aa).

The segment at 107 to 153 (QDKAKAKRVAQAKSANPAAKTAKKPVKKPVAKRPKPAQSSKPAKEPV) is disordered. Residues 117–126 (QAKSANPAAK) show a composition bias toward low complexity. Residues 127 to 141 (TAKKPVKKPVAKRPK) show a composition bias toward basic residues.

The protein belongs to the ProQ family.

Its subcellular location is the cytoplasm. Its function is as follows. RNA chaperone with significant RNA binding, RNA strand exchange and RNA duplexing activities. The polypeptide is RNA chaperone ProQ (Shewanella pealeana (strain ATCC 700345 / ANG-SQ1)).